The following is a 553-amino-acid chain: Keratin, type II cytoskeletal 6A (553 aa).

Positions 1–20 are enriched in polar residues; it reads MSTKTTIKSQTSHRGYSASS. The segment at 1-21 is disordered; sequence MSTKTTIKSQTSHRGYSASSA. A head region spans residues 1-151; the sequence is MSTKTTIKSQ…DPTIQRVRTE (151 aa). A coil 1A region spans residues 152 to 187; that stretch reads EREQIKTLNNKFASFIDKVRFLEQQNKVLDTKWALL. The IF rod domain occupies 152–465; it reads EREQIKTLNN…KLLEGEECRL (314 aa). Residues 188 to 206 form a linker 1 region; that stretch reads QEQGTKTVRQNLEPMFEQY. The segment at 207-298 is coil 1B; it reads ISNLRRQLDS…ALYEAELSQM (92 aa). Residues 299 to 322 form a linker 12 region; it reads QTHISDTSVVLSMDNNRSLDLDSI. Residues 323-461 are coil 2; the sequence is IAEVKAQYED…ATYRKLLEGE (139 aa). The segment at 462–553 is tail; it reads ECRLNGEGVG…TSSSKKSYRQ (92 aa). The disordered stretch occupies residues 528–553; that stretch reads LSSSGGLSSSTIKYTTTSSSKKSYRQ. Low complexity predominate over residues 531–553; the sequence is SGGLSSSTIKYTTTSSSKKSYRQ.

The protein belongs to the intermediate filament family. As to quaternary structure, heterodimer of a type I and a type II keratin. KRT6 isomers associate with KRT16 and/or KRT17. Interacts with TCHP. Predominates in the adult trunk skin, tongue, trachea/esophagus and eye. In adult skin, localization is restricted to hair follicles, where it is localized predominantly in the outer root sheath.

In terms of biological role, epidermis-specific type I keratin involved in wound healing. Involved in the activation of follicular keratinocytes after wounding, while it does not play a major role in keratinocyte proliferation or migration. Participates in the regulation of epithelial migration by inhibiting the activity of SRC during wound repair. This is Keratin, type II cytoskeletal 6A (Krt6a) from Mus musculus (Mouse).